Consider the following 217-residue polypeptide: Probable transaldolase (217 aa).

Catalysis depends on Lys-83, which acts as the Schiff-base intermediate with substrate.

This sequence belongs to the transaldolase family. Type 3B subfamily.

The protein resides in the cytoplasm. The catalysed reaction is D-sedoheptulose 7-phosphate + D-glyceraldehyde 3-phosphate = D-erythrose 4-phosphate + beta-D-fructose 6-phosphate. It participates in carbohydrate degradation; pentose phosphate pathway; D-glyceraldehyde 3-phosphate and beta-D-fructose 6-phosphate from D-ribose 5-phosphate and D-xylulose 5-phosphate (non-oxidative stage): step 2/3. Its function is as follows. Transaldolase is important for the balance of metabolites in the pentose-phosphate pathway. The polypeptide is Probable transaldolase (Brucella melitensis biotype 1 (strain ATCC 23456 / CCUG 17765 / NCTC 10094 / 16M)).